The primary structure comprises 297 residues: MAKALQGVMAALLTPFDHQQQLDSESLRRLVRFNIGQGIDGLYVGGSTGEAFVQSLAEREQVLEIVAEEAKGKITLIAHVGTVSTAESQQLASAAKRYGFDAVSAVTPFYYPFSFEEHCDHYRAIIDSADGLPMVVYNIPALSGVKLTLDQINTLVTLPGVSALKQTSGDLFQMEQIRRAHPDLVLYNGYDEIFASGLLAGADGGIGSTYNIMGWRYQGIVQALREGDVAKAQRLQTECNKVIDLLIKTGVFRGLKTVLHYMDVLSVPLCRKPFAPVDEKYLPALKALAQQLMEEKA.

Residues S47 and T48 each contribute to the aceneuramate site. Residue Y137 is the Proton donor of the active site. The Schiff-base intermediate with substrate role is filled by K165. 5 residues coordinate aceneuramate: T167, G189, D191, E192, and S208.

The protein belongs to the DapA family. NanA subfamily. As to quaternary structure, homotetramer.

The protein localises to the cytoplasm. The enzyme catalyses aceneuramate = aldehydo-N-acetyl-D-mannosamine + pyruvate. It functions in the pathway amino-sugar metabolism; N-acetylneuraminate degradation; D-fructose 6-phosphate from N-acetylneuraminate: step 1/5. Catalyzes the reversible aldol cleavage of N-acetylneuraminic acid (sialic acid; Neu5Ac) to form pyruvate and N-acetylmannosamine (ManNAc) via a Schiff base intermediate. The sequence is that of N-acetylneuraminate lyase from Salmonella choleraesuis (strain SC-B67).